The chain runs to 380 residues: MANIRKTHPLLKIINGAFIDLPTPSNISVWWNFGSLLGLCLITQILTGLFLAMHYTADISTAFSSVAHICRDVNYGWLIRNIHANGASFFFICLYLHVARGMYYGSYLQKETWNIGVILLLLTMMTAFVGYVLPWGQMSFWGATVITNLLSAFPDIGDTLVQWIWGGFSVDNATLTRFFAFHFLLPFVIAGASMIHLLFLHQTGSNNPTGLNSDADKVTFHPYFSYKDLFGFTLMLVGLTSVALFSPNLLGDPDNFTPANPLVTPPHIKPEWYFLFAYAILRSIPNKLGGVLALLFSILVLMLVPMLHTSKQRGNTFRPLSQILFWALVADMLVLTWIGGQPVEHPFVLIGQVASTVYFALFLIALPLTGWLENKALNWN.

4 consecutive transmembrane segments (helical) span residues 33 to 53 (FGSL…FLAM), 77 to 98 (WLIR…YLHV), 113 to 133 (WNIG…GYVL), and 178 to 198 (FFAF…IHLL). The heme b site is built by histidine 83 and histidine 97. Heme b-binding residues include histidine 182 and histidine 196. Histidine 201 provides a ligand contact to a ubiquinone. 4 helical membrane-spanning segments follow: residues 226-246 (YKDL…ALFS), 288-308 (LGGV…PMLH), 320-340 (LSQI…WIGG), and 347-367 (FVLI…IALP).

The protein belongs to the cytochrome b family. As to quaternary structure, the cytochrome bc1 complex contains 3 respiratory subunits (MT-CYB, CYC1 and UQCRFS1), 2 core proteins (UQCRC1 and UQCRC2) and probably 6 low-molecular weight proteins. It depends on heme b as a cofactor.

Its subcellular location is the mitochondrion inner membrane. Component of the ubiquinol-cytochrome c reductase complex (complex III or cytochrome b-c1 complex) that is part of the mitochondrial respiratory chain. The b-c1 complex mediates electron transfer from ubiquinol to cytochrome c. Contributes to the generation of a proton gradient across the mitochondrial membrane that is then used for ATP synthesis. The polypeptide is Cytochrome b (mt-cyb) (Acipenser transmontanus (White sturgeon)).